A 357-amino-acid polypeptide reads, in one-letter code: Protein RecA (357 aa).

Residue 73 to 80 (GPESSGKT) participates in ATP binding.

The protein belongs to the RecA family.

It is found in the cytoplasm. Its function is as follows. Can catalyze the hydrolysis of ATP in the presence of single-stranded DNA, the ATP-dependent uptake of single-stranded DNA by duplex DNA, and the ATP-dependent hybridization of homologous single-stranded DNAs. It interacts with LexA causing its activation and leading to its autocatalytic cleavage. The sequence is that of Protein RecA from Methylibium petroleiphilum (strain ATCC BAA-1232 / LMG 22953 / PM1).